We begin with the raw amino-acid sequence, 197 residues long: Phosphoheptose isomerase (197 aa).

Residues 37-197 (MLQCLMNDGK…CIDSVLLEGM (161 aa)) form the SIS domain. 52 to 54 (NGG) is a binding site for substrate. The Zn(2+) site is built by H61 and E65. Residues E65, 94–95 (ND), 120–122 (STS), S125, and Q175 contribute to the substrate site. Zn(2+)-binding residues include Q175 and H183.

The protein belongs to the SIS family. GmhA subfamily. In terms of assembly, homotetramer. Zn(2+) serves as cofactor.

Its subcellular location is the cytoplasm. The catalysed reaction is 2 D-sedoheptulose 7-phosphate = D-glycero-alpha-D-manno-heptose 7-phosphate + D-glycero-beta-D-manno-heptose 7-phosphate. It functions in the pathway carbohydrate biosynthesis; D-glycero-D-manno-heptose 7-phosphate biosynthesis; D-glycero-alpha-D-manno-heptose 7-phosphate and D-glycero-beta-D-manno-heptose 7-phosphate from sedoheptulose 7-phosphate: step 1/1. Catalyzes the isomerization of sedoheptulose 7-phosphate in D-glycero-D-manno-heptose 7-phosphate. The chain is Phosphoheptose isomerase from Neisseria gonorrhoeae (strain ATCC 700825 / FA 1090).